We begin with the raw amino-acid sequence, 199 residues long: NAD(P)H dehydrogenase (quinone) (199 aa).

One can recognise a Flavodoxin-like domain in the interval Val-4 to Val-190. Residues Ser-10–Ile-15 and Thr-78–Phe-80 contribute to the FMN site. Tyr-12 lines the NAD(+) pocket. Position 98 (Trp-98) interacts with substrate. FMN-binding positions include Ser-113–Gly-119 and His-134.

This sequence belongs to the WrbA family. FMN serves as cofactor.

The catalysed reaction is a quinone + NADH + H(+) = a quinol + NAD(+). It catalyses the reaction a quinone + NADPH + H(+) = a quinol + NADP(+). The sequence is that of NAD(P)H dehydrogenase (quinone) from Rhizobium rhizogenes (strain K84 / ATCC BAA-868) (Agrobacterium radiobacter).